The following is a 428-amino-acid chain: Adenylosuccinate synthetase (428 aa).

Residues 12-18 (GDEGKGK) and 40-42 (GHT) each bind GTP. The active-site Proton acceptor is D13. Mg(2+) is bound by residues D13 and G40. Residues 13–16 (DEGK), 38–41 (NAGH), T128, R142, Q223, T238, and R302 contribute to the IMP site. The Proton donor role is filled by H41. 298-304 (TTTGRPR) contributes to the substrate binding site. Residues R304, 330–332 (KLD), and 412–414 (SVG) each bind GTP.

Belongs to the adenylosuccinate synthetase family. In terms of assembly, homodimer. Mg(2+) is required as a cofactor.

It is found in the cytoplasm. The catalysed reaction is IMP + L-aspartate + GTP = N(6)-(1,2-dicarboxyethyl)-AMP + GDP + phosphate + 2 H(+). It functions in the pathway purine metabolism; AMP biosynthesis via de novo pathway; AMP from IMP: step 1/2. Plays an important role in the de novo pathway of purine nucleotide biosynthesis. Catalyzes the first committed step in the biosynthesis of AMP from IMP. The protein is Adenylosuccinate synthetase of Desulforamulus reducens (strain ATCC BAA-1160 / DSM 100696 / MI-1) (Desulfotomaculum reducens).